The primary structure comprises 79 residues: Large ribosomal subunit protein bL28 (79 aa).

It belongs to the bacterial ribosomal protein bL28 family.

This Blochmanniella floridana protein is Large ribosomal subunit protein bL28.